A 170-amino-acid chain; its full sequence is Lipoprotein signal peptidase (170 aa).

3 helical membrane-spanning segments follow: residues 9–29 (IGSV…KYLV), 72–92 (LFFL…ILKE), and 93–113 (TNKI…GNII). Catalysis depends on residues aspartate 124 and aspartate 146. A helical transmembrane segment spans residues 142–162 (FNFADSYVVIGITLFIIYDLF).

It belongs to the peptidase A8 family.

Its subcellular location is the cell inner membrane. The catalysed reaction is Release of signal peptides from bacterial membrane prolipoproteins. Hydrolyzes -Xaa-Yaa-Zaa-|-(S,diacylglyceryl)Cys-, in which Xaa is hydrophobic (preferably Leu), and Yaa (Ala or Ser) and Zaa (Gly or Ala) have small, neutral side chains.. It functions in the pathway protein modification; lipoprotein biosynthesis (signal peptide cleavage). In terms of biological role, this protein specifically catalyzes the removal of signal peptides from prolipoproteins. The chain is Lipoprotein signal peptidase from Borrelia hermsii (strain HS1 / DAH).